The chain runs to 888 residues: Rab GTPase-activating protein eat-17 (888 aa).

The segment covering 41–60 (RSNSNSTSSPRNSPSQLSPP) has biased composition (low complexity). Disordered stretches follow at residues 41–87 (RSNS…CETG) and 104–135 (LNKS…HSPE). Residues 114-123 (SVASKKTGSS) show a composition bias toward polar residues. Positions 124–133 (ESRKGAREHS) are enriched in basic and acidic residues. The Rab-GAP TBC domain occupies 173-357 (GIPQHFRMIA…RIMDCFLVEG (185 aa)). The disordered stretch occupies residues 631–654 (ASIEKESTSEAHSTQQQPSPPLTS). A coiled-coil region spans residues 694–770 (EADTLAELKE…ESEFNEGRIN (77 aa)). The interval 854-888 (LAEEGSATETDELRPKELNDGNDTTDSGVQLSDSH) is disordered. The segment covering 874–888 (GNDTTDSGVQLSDSH) has biased composition (polar residues).

In terms of assembly, may interact with rab-6.2 (in GTP-bound form). Highly expressed in the terminal bulb muscles, pharyngeal muscle, in intestine and vulva.

In terms of biological role, rab GTPase activating protein for the small GTPase rab-6.2. Required for grinder formation, which is the feeding organ that breaks down food. This Caenorhabditis elegans protein is Rab GTPase-activating protein eat-17.